Here is a 191-residue protein sequence, read N- to C-terminus: Ribonuclease HII (191 aa).

The RNase H type-2 domain occupies 7-191 (ILMAGVDEVG…YSPVADLISK (185 aa)). Positions 13, 14, and 103 each coordinate a divalent metal cation.

This sequence belongs to the RNase HII family. It depends on Mn(2+) as a cofactor. The cofactor is Mg(2+).

The protein localises to the cytoplasm. It carries out the reaction Endonucleolytic cleavage to 5'-phosphomonoester.. Endonuclease that specifically degrades the RNA of RNA-DNA hybrids. This Legionella pneumophila subsp. pneumophila (strain Philadelphia 1 / ATCC 33152 / DSM 7513) protein is Ribonuclease HII.